A 322-amino-acid polypeptide reads, in one-letter code: 2-methylene-furan-3-one reductase (322 aa).

NADP(+) contacts are provided by residues K59, 174-175 (GV), 197-200 (STKK), Y215, I253, 264-266 (FVL), 311-312 (RA), and 311-322 (RATGKVVVYPIP). K59 contacts substrate.

This sequence belongs to the zinc-containing alcohol dehydrogenase family. Quinone oxidoreductase subfamily. Monomer. The N-terminus is blocked.

The enzyme catalyses 4-hydroxy-2,5-dimethyl-furan-3(2H)-one + NADP(+) = 4-hydroxy-5-methyl-2-methylenefuran-3(2H)-one + NADPH + H(+). In terms of biological role, enone oxidoreductase involved in the biosynthesis of 4-hydroxy-2,5-dimethyl-3(2H)-furanone (HDMF or furaneol), the key flavor compound in strawberries. Can use both NADH and NADPH as the electron donor. This chain is 2-methylene-furan-3-one reductase (EO), found in Fragaria ananassa (Strawberry).